An 80-amino-acid chain; its full sequence is ATP synthase F(1) complex subunit delta, mitochondrial (80 aa).

The N-terminal 22 residues, 1-22 (MLPATLLRXSGLGRVVRQARAY), are a transit peptide targeting the mitochondrion.

It belongs to the ATPase epsilon chain family. Component of the ATP synthase complex composed at least of ATP5F1A/subunit alpha, ATP5F1B/subunit beta, ATP5MC1/subunit c (homooctomer), MT-ATP6/subunit a, MT-ATP8/subunit 8, ATP5ME/subunit e, ATP5MF/subunit f, ATP5MG/subunit g, ATP5MK/subunit k, ATP5MJ/subunit j, ATP5F1C/subunit gamma, ATP5F1D/subunit delta, ATP5F1E/subunit epsilon, ATP5PF/subunit F6, ATP5PB/subunit b, ATP5PD/subunit d, ATP5PO/subunit OSCP. ATP synthase complex consists of a soluble F(1) head domain (subunits alpha(3) and beta(3)) - the catalytic core - and a membrane F(0) domain - the membrane proton channel (subunits c, a, 8, e, f, g, k and j). These two domains are linked by a central stalk (subunits gamma, delta, and epsilon) rotating inside the F1 region and a stationary peripheral stalk (subunits F6, b, d, and OSCP). Component of a complex composed at least by ATPIF1, ATP5F1A, ATP5F1B, ATP5F1C AND ATP5F1E.

It is found in the mitochondrion. The protein resides in the mitochondrion inner membrane. In terms of biological role, subunit delta, of the mitochondrial membrane ATP synthase complex (F(1)F(0) ATP synthase or Complex V) that produces ATP from ADP in the presence of a proton gradient across the membrane which is generated by electron transport complexes of the respiratory chain. ATP synthase complex consist of a soluble F(1) head domain - the catalytic core - and a membrane F(1) domain - the membrane proton channel. These two domains are linked by a central stalk rotating inside the F(1) region and a stationary peripheral stalk. During catalysis, ATP synthesis in the catalytic domain of F(1) is coupled via a rotary mechanism of the central stalk subunits to proton translocation. In vivo, can only synthesize ATP although its ATP hydrolase activity can be activated artificially in vitro. With the central stalk subunit gamma, is essential for the biogenesis of F(1) catalytic part of the ATP synthase complex namely in the formation of F1 assembly intermediate. The protein is ATP synthase F(1) complex subunit delta, mitochondrial of Sus scrofa (Pig).